The chain runs to 369 residues: Chaperone protein DnaJ (369 aa).

One can recognise a J domain in the interval 5–69 (DYYDVLGISK…NKKAQYDRFG (65 aa)). A CR-type zinc finger spans residues 131–213 (GTTKNVSVDI…CSGAGRVKAK (83 aa)). Zn(2+)-binding residues include Cys144, Cys147, Cys161, Cys164, Cys187, Cys190, Cys201, and Cys204. 4 CXXCXGXG motif repeats span residues 144–151 (CGHCHGSG), 161–168 (CSKCHGQG), 187–194 (CPQCQGEG), and 201–208 (CHVCSGAG).

Belongs to the DnaJ family. Homodimer. Requires Zn(2+) as cofactor.

It is found in the cytoplasm. In terms of biological role, participates actively in the response to hyperosmotic and heat shock by preventing the aggregation of stress-denatured proteins and by disaggregating proteins, also in an autonomous, DnaK-independent fashion. Unfolded proteins bind initially to DnaJ; upon interaction with the DnaJ-bound protein, DnaK hydrolyzes its bound ATP, resulting in the formation of a stable complex. GrpE releases ADP from DnaK; ATP binding to DnaK triggers the release of the substrate protein, thus completing the reaction cycle. Several rounds of ATP-dependent interactions between DnaJ, DnaK and GrpE are required for fully efficient folding. Also involved, together with DnaK and GrpE, in the DNA replication of plasmids through activation of initiation proteins. The sequence is that of Chaperone protein DnaJ from Acholeplasma laidlawii.